We begin with the raw amino-acid sequence, 653 residues long: Aspartate--tRNA ligase, mitochondrial (653 aa).

A mitochondrion-targeting transit peptide spans 1-46 (MYLGFWLSRLCRGLSRPIGKTMRPIWGSLSRNLALSSQRIPEFSSF). At Thr218 the chain carries Phosphothreonine. Position 241 is a phosphoserine (Ser241). Residues 243–246 (QQFK) are aspartate. Arg265 provides a ligand contact to L-aspartate. Residues 265–267 (RDE) and Glu534 each bind ATP. An L-aspartate-binding site is contributed by Arg541. Residue 583 to 586 (GLDR) coordinates ATP.

This sequence belongs to the class-II aminoacyl-tRNA synthetase family. Type 1 subfamily. Homodimer.

It is found in the mitochondrion matrix. It localises to the mitochondrion membrane. The enzyme catalyses tRNA(Asp) + L-aspartate + ATP = L-aspartyl-tRNA(Asp) + AMP + diphosphate. Catalyzes the attachment of aspartate to tRNA(Asp) in a two-step reaction: aspartate is first activated by ATP to form Asp-AMP and then transferred to the acceptor end of tRNA(Asp). The sequence is that of Aspartate--tRNA ligase, mitochondrial (Dars2) from Mus musculus (Mouse).